Reading from the N-terminus, the 192-residue chain is Signal peptidase complex catalytic subunit SEC11C (192 aa).

Topologically, residues 1–28 are cytoplasmic; sequence MVRAGAVGAHLPASGLDIFGDLKKMNKR. The chain crosses the membrane as a helical; Signal-anchor for type II membrane protein span at residues 29–48; the sequence is QLYYQVLNFAMIVSSALMIW. Residues 49–192 lie on the Lumenal side of the membrane; that stretch reads KGLIVLTGSE…GAYVLLKRES (144 aa). Active-site charge relay system residues include S68, H108, and D134. The C-terminal short (CTS) helix stretch occupies residues 177 to 188; it reads ALLAVMGAYVLL.

It belongs to the peptidase S26B family. Component of the signal peptidase complex paralog C (SPC-C) composed of a catalytic subunit SEC11C and three accessory subunits SPCS1, SPCS2 and SPCS3. Within the complex, interacts with SPCS2 and SPCS3. The complex induces a local thinning of the ER membrane which is used to measure the length of the signal peptide (SP) h-region of protein substrates. This ensures the selectivity of the complex towards h-regions shorter than 18-20 amino acids. Post-translationally, may undergo processing at the N-terminus.

It is found in the endoplasmic reticulum membrane. It carries out the reaction Cleavage of hydrophobic, N-terminal signal or leader sequences from secreted and periplasmic proteins.. Its function is as follows. Catalytic component of the signal peptidase complex (SPC) which catalyzes the cleavage of N-terminal signal sequences from nascent proteins as they are translocated into the lumen of the endoplasmic reticulum. Specifically cleaves N-terminal signal peptides that contain a hydrophobic alpha-helix (h-region) shorter than 18-20 amino acids. The chain is Signal peptidase complex catalytic subunit SEC11C (SEC11C) from Homo sapiens (Human).